The primary structure comprises 213 residues: Anti-sigma-E factor ChrR (213 aa).

Positions 2–85 (TIRHHVSDAL…QIQRPAPARR (84 aa)) are sufficient to bind sigma factor and inhibit its activity. Zn(2+)-binding residues include H6, H31, C35, C38, H141, H143, E147, and H177. Positions 86–194 (ADPRAPAPLA…LDCICLAATD (109 aa)) are required for response to singlet oxygen.

The protein belongs to the zinc-associated anti-sigma factor (ZAS) superfamily. As to quaternary structure, forms a 1:1 complex with cognate ECF RNA polymerase sigma factor RpoE; this inhibits the interaction of RpoE with the RNA polymerase catalytic core. Zn(2+) serves as cofactor.

Anti-sigma factor that inhibits the activity of the extracytoplasmic function (ECF) sigma-E factor (RpoE), thereby indirectly regulating the transcription of the cycA and rpoE genes. ECF sigma factors are held in an inactive form by a cognate anti-sigma factor. The polypeptide is Anti-sigma-E factor ChrR (chrR) (Cereibacter sphaeroides (strain ATCC 17023 / DSM 158 / JCM 6121 / CCUG 31486 / LMG 2827 / NBRC 12203 / NCIMB 8253 / ATH 2.4.1.) (Rhodobacter sphaeroides)).